The sequence spans 187 residues: Ribosome-recycling factor (187 aa).

Belongs to the RRF family.

It is found in the cytoplasm. Responsible for the release of ribosomes from messenger RNA at the termination of protein biosynthesis. May increase the efficiency of translation by recycling ribosomes from one round of translation to another. This chain is Ribosome-recycling factor, found in Methylorubrum populi (strain ATCC BAA-705 / NCIMB 13946 / BJ001) (Methylobacterium populi).